The primary structure comprises 448 residues: N-succinylarginine dihydrolase (448 aa).

Substrate is bound by residues 19-28 (GGLSYGNVAS), N110, and 137-138 (HR). E174 is an active-site residue. R214 provides a ligand contact to substrate. H250 is an active-site residue. Substrate contacts are provided by D252 and N365. C371 acts as the Nucleophile in catalysis.

This sequence belongs to the succinylarginine dihydrolase family. As to quaternary structure, homodimer.

It carries out the reaction N(2)-succinyl-L-arginine + 2 H2O + 2 H(+) = N(2)-succinyl-L-ornithine + 2 NH4(+) + CO2. It participates in amino-acid degradation; L-arginine degradation via AST pathway; L-glutamate and succinate from L-arginine: step 2/5. Its function is as follows. Catalyzes the hydrolysis of N(2)-succinylarginine into N(2)-succinylornithine, ammonia and CO(2). The polypeptide is N-succinylarginine dihydrolase (Pseudomonas fluorescens (strain ATCC BAA-477 / NRRL B-23932 / Pf-5)).